Consider the following 102-residue polypeptide: Small ribosomal subunit protein uS10 (102 aa).

This sequence belongs to the universal ribosomal protein uS10 family. Part of the 30S ribosomal subunit.

In terms of biological role, involved in the binding of tRNA to the ribosomes. The protein is Small ribosomal subunit protein uS10 of Thermotoga maritima (strain ATCC 43589 / DSM 3109 / JCM 10099 / NBRC 100826 / MSB8).